The sequence spans 392 residues: CCA-adding enzyme (392 aa).

The ATP site is built by S45 and K48. S45 and K48 together coordinate CTP. Mg(2+) is bound by residues D55, D57, and E106. H129, K148, and Y157 together coordinate ATP. CTP contacts are provided by H129, K148, and Y157.

It belongs to the tRNA nucleotidyltransferase/poly(A) polymerase family. Archaeal CCA-adding enzyme subfamily. Homodimer. The cofactor is Mg(2+).

It carries out the reaction a tRNA precursor + 2 CTP + ATP = a tRNA with a 3' CCA end + 3 diphosphate. It catalyses the reaction a tRNA with a 3' CCA end + 2 CTP + ATP = a tRNA with a 3' CCACCA end + 3 diphosphate. In terms of biological role, catalyzes the addition and repair of the essential 3'-terminal CCA sequence in tRNAs without using a nucleic acid template. Adds these three nucleotides in the order of C, C, and A to the tRNA nucleotide-73, using CTP and ATP as substrates and producing inorganic pyrophosphate. tRNA 3'-terminal CCA addition is required both for tRNA processing and repair. Also involved in tRNA surveillance by mediating tandem CCA addition to generate a CCACCA at the 3' terminus of unstable tRNAs. While stable tRNAs receive only 3'-terminal CCA, unstable tRNAs are marked with CCACCA and rapidly degraded. The chain is CCA-adding enzyme from Nanoarchaeum equitans (strain Kin4-M).